Consider the following 552-residue polypeptide: Dihydroxy-acid dehydratase (552 aa).

Aspartate 78 serves as a coordination point for Mg(2+). Cysteine 119 serves as a coordination point for [2Fe-2S] cluster. 2 residues coordinate Mg(2+): aspartate 120 and lysine 121. An N6-carboxylysine modification is found at lysine 121. Cysteine 191 lines the [2Fe-2S] cluster pocket. Glutamate 442 is a binding site for Mg(2+). The Proton acceptor role is filled by serine 468.

Belongs to the IlvD/Edd family. As to quaternary structure, homodimer. It depends on [2Fe-2S] cluster as a cofactor. Mg(2+) is required as a cofactor.

The catalysed reaction is (2R)-2,3-dihydroxy-3-methylbutanoate = 3-methyl-2-oxobutanoate + H2O. It catalyses the reaction (2R,3R)-2,3-dihydroxy-3-methylpentanoate = (S)-3-methyl-2-oxopentanoate + H2O. The protein operates within amino-acid biosynthesis; L-isoleucine biosynthesis; L-isoleucine from 2-oxobutanoate: step 3/4. Its pathway is amino-acid biosynthesis; L-valine biosynthesis; L-valine from pyruvate: step 3/4. Functionally, functions in the biosynthesis of branched-chain amino acids. Catalyzes the dehydration of (2R,3R)-2,3-dihydroxy-3-methylpentanoate (2,3-dihydroxy-3-methylvalerate) into 2-oxo-3-methylpentanoate (2-oxo-3-methylvalerate) and of (2R)-2,3-dihydroxy-3-methylbutanoate (2,3-dihydroxyisovalerate) into 2-oxo-3-methylbutanoate (2-oxoisovalerate), the penultimate precursor to L-isoleucine and L-valine, respectively. This chain is Dihydroxy-acid dehydratase, found in Ruminiclostridium cellulolyticum (strain ATCC 35319 / DSM 5812 / JCM 6584 / H10) (Clostridium cellulolyticum).